A 359-amino-acid polypeptide reads, in one-letter code: Peptide chain release factor 1 (359 aa).

Residue Q235 is modified to N5-methylglutamine.

This sequence belongs to the prokaryotic/mitochondrial release factor family. Post-translationally, methylated by PrmC. Methylation increases the termination efficiency of RF1.

The protein resides in the cytoplasm. Functionally, peptide chain release factor 1 directs the termination of translation in response to the peptide chain termination codons UAG and UAA. This chain is Peptide chain release factor 1, found in Nitrosomonas eutropha (strain DSM 101675 / C91 / Nm57).